Here is a 158-residue protein sequence, read N- to C-terminus: Nucleoside diphosphate kinase (158 aa).

Residues Lys-16, Phe-64, Arg-92, Thr-98, Arg-109, and Asn-119 each contribute to the ATP site. His-122 (pros-phosphohistidine intermediate) is an active-site residue.

The protein belongs to the NDK family. Requires Mg(2+) as cofactor.

It localises to the cytoplasm. The enzyme catalyses a 2'-deoxyribonucleoside 5'-diphosphate + ATP = a 2'-deoxyribonucleoside 5'-triphosphate + ADP. It catalyses the reaction a ribonucleoside 5'-diphosphate + ATP = a ribonucleoside 5'-triphosphate + ADP. Major role in the synthesis of nucleoside triphosphates other than ATP. The ATP gamma phosphate is transferred to the NDP beta phosphate via a ping-pong mechanism, using a phosphorylated active-site intermediate. The sequence is that of Nucleoside diphosphate kinase from Haloquadratum walsbyi (strain DSM 16790 / HBSQ001).